The primary structure comprises 432 residues: Alpha-ketoglutarate permease (432 aa).

Over 1–32 (MAESTVTADSKLTSSDTRRRIWAIVGASSGNL) the chain is Cytoplasmic. The chain crosses the membrane as a helical span at residues 33 to 53 (VEWFDFYVYSFCSLYFAHIFF). Residues 54–62 (PSGNTTTQL) lie on the Periplasmic side of the membrane. Residues 63-83 (LQTAGVFAAGFLMRPIGGWLF) form a helical membrane-spanning segment. The Cytoplasmic segment spans residues 84–95 (GRIADKHGRKKS). Residues 96–116 (MLLSVCMMCFGSLVIACLPGY) traverse the membrane as a helical segment. The Periplasmic portion of the chain corresponds to 117 to 118 (ET). A helical membrane pass occupies residues 119–139 (IGTWAPALLLLARLFQGLSVG). The Cytoplasmic segment spans residues 140–162 (GEYGTSATYMSEVAVEGRKGFYA). A helical membrane pass occupies residues 163-183 (SFQYVTLIGGQLLALLVVVVL). Residues 184 to 193 (QHTMEDAALR) are Periplasmic-facing. The chain crosses the membrane as a helical span at residues 194–214 (EWGWRIPFALGAVLAVVALWL). Residues 215–243 (RRQLDETSQQETRALKEAGSLKGLWRNRR) lie on the Cytoplasmic side of the membrane. The helical transmembrane segment at 244-264 (AFIMVLGFTAAGSLCFYTFTT) threads the bilayer. The Periplasmic portion of the chain corresponds to 265–279 (YMQKYLVNTAGMHAN). A helical transmembrane segment spans residues 280–300 (VASGIMTAALFVFMLIQPLIG). Topologically, residues 301 to 309 (ALSDKIGRR) are cytoplasmic. The helical transmembrane segment at 310–330 (TSMLCFGSLAAIFTVPILSAL) threads the bilayer. At 331–339 (QNVSSPYAA) the chain is on the periplasmic side. The helical transmembrane segment at 340–360 (FGLVMCALLIVSFYTSISGIL) threads the bilayer. Residues 361–373 (KAEMFPAQVRALG) are Cytoplasmic-facing. The helical transmembrane segment at 374–394 (VGLSYAVANAIFGGSAEYVAL) threads the bilayer. Topologically, residues 395–402 (SLKSIGME) are periplasmic. The chain crosses the membrane as a helical span at residues 403–423 (TAFFWYVTLMAVVAFLVSLML). Topologically, residues 424–432 (HRKGKGMRL) are cytoplasmic.

Belongs to the major facilitator superfamily. Metabolite:H+ Symporter (MHS) family (TC 2.A.1.6) family.

It is found in the cell inner membrane. Its function is as follows. Uptake of alpha-ketoglutarate across the boundary membrane with the concomitant import of a cation (symport system). The sequence is that of Alpha-ketoglutarate permease (kgtP) from Escherichia coli (strain K12).